We begin with the raw amino-acid sequence, 404 residues long: Formate-dependent phosphoribosylglycinamide formyltransferase (404 aa).

Residues 25-26 and glutamate 85 each bind N(1)-(5-phospho-beta-D-ribosyl)glycinamide; that span reads EL. ATP contacts are provided by residues arginine 118, lysine 159, 164 to 169, 199 to 202, and glutamate 207; these read SSGKGQ and EGFV. One can recognise an ATP-grasp domain in the interval 123–318; the sequence is RLAAEELGLP…EFELHARAIL (196 aa). Mg(2+)-binding residues include glutamate 277 and glutamate 289. Residues aspartate 296, lysine 365, and 372–373 contribute to the N(1)-(5-phospho-beta-D-ribosyl)glycinamide site; that span reads RR.

Belongs to the PurK/PurT family. Homodimer.

It catalyses the reaction N(1)-(5-phospho-beta-D-ribosyl)glycinamide + formate + ATP = N(2)-formyl-N(1)-(5-phospho-beta-D-ribosyl)glycinamide + ADP + phosphate + H(+). It participates in purine metabolism; IMP biosynthesis via de novo pathway; N(2)-formyl-N(1)-(5-phospho-D-ribosyl)glycinamide from N(1)-(5-phospho-D-ribosyl)glycinamide (formate route): step 1/1. Its function is as follows. Involved in the de novo purine biosynthesis. Catalyzes the transfer of formate to 5-phospho-ribosyl-glycinamide (GAR), producing 5-phospho-ribosyl-N-formylglycinamide (FGAR). Formate is provided by PurU via hydrolysis of 10-formyl-tetrahydrofolate. This Burkholderia thailandensis (strain ATCC 700388 / DSM 13276 / CCUG 48851 / CIP 106301 / E264) protein is Formate-dependent phosphoribosylglycinamide formyltransferase.